Reading from the N-terminus, the 387-residue chain is 1,3-propanediol dehydrogenase (387 aa).

The protein belongs to the iron-containing alcohol dehydrogenase family. Homooctamer. Fe cation serves as cofactor.

The enzyme catalyses propane-1,3-diol + NAD(+) = 3-hydroxypropanal + NADH + H(+). With respect to regulation, inhibited by the metal chelator 1,10-phenanthroline. Its function is as follows. Catalyzes the reduction of 3-hydroxypropanal. Is considerably less active with glyceraldehyde, propionaldehyde, acetaldehyde, and butyraldehyde. Also catalyzes the oxidation of various primary, secondary, and tertiary alcohols. Is most active with substrates containing two primary alcohol groups separated by one or two carbon atoms. 1,3-propanediol is the preferred substrate. This Citrobacter freundii protein is 1,3-propanediol dehydrogenase.